The sequence spans 1032 residues: Exportin-T (1032 aa).

This sequence belongs to the exportin family.

It is found in the nucleus. The protein localises to the cytoplasm. Its function is as follows. tRNA nucleus export receptor which facilitates tRNA translocation across the nuclear pore complex. Involved in pre-tRNA splicing, probably by affecting the interaction of pre-tRNA with splicing endonuclease. The protein is Exportin-T (los1) of Aspergillus fumigatus (strain CBS 144.89 / FGSC A1163 / CEA10) (Neosartorya fumigata).